Here is a 179-residue protein sequence, read N- to C-terminus: Large ribosomal subunit protein uL5 (179 aa).

Belongs to the universal ribosomal protein uL5 family. In terms of assembly, part of the 50S ribosomal subunit; part of the 5S rRNA/L5/L18/L25 subcomplex. Contacts the 5S rRNA and the P site tRNA. Forms a bridge to the 30S subunit in the 70S ribosome.

This is one of the proteins that bind and probably mediate the attachment of the 5S RNA into the large ribosomal subunit, where it forms part of the central protuberance. In the 70S ribosome it contacts protein S13 of the 30S subunit (bridge B1b), connecting the 2 subunits; this bridge is implicated in subunit movement. Contacts the P site tRNA; the 5S rRNA and some of its associated proteins might help stabilize positioning of ribosome-bound tRNAs. This is Large ribosomal subunit protein uL5 from Trichlorobacter lovleyi (strain ATCC BAA-1151 / DSM 17278 / SZ) (Geobacter lovleyi).